A 192-amino-acid chain; its full sequence is uncharacterized protein (192 aa).

In terms of domain architecture, Nudix hydrolase spans 29 to 160; sequence QRQAAVLVPV…PLDIHRRGNH (132 aa). The Nudix box signature appears at 67-89; it reads GAVDDTDASLIAAALREAQEEVA. Positions 83 and 87 each coordinate Mg(2+).

It belongs to the Nudix hydrolase family. PCD1 subfamily. Requires Mn(2+) as cofactor. Mg(2+) serves as cofactor.

Probably mediates the hydrolysis of some nucleoside diphosphate derivatives. This is an uncharacterized protein from Cronobacter sakazakii (strain ATCC BAA-894) (Enterobacter sakazakii).